The following is a 288-amino-acid chain: ATP synthase subunit a (288 aa).

Transmembrane regions (helical) follow at residues 47–67 (LDSMLWSIGLGIVFCALFWLV), 104–124 (LIAPLALTIFVWIFLMNLMDL), 157–177 (DPNITLGMSFSVFALIIYYSI), 199–219 (PIAKIILIPINFILEFVTLIA), 237–257 (LIFVLIALMPFWIQWALSVPW), and 258–278 (AIFHILIITLQAFVFMMLTIV).

It belongs to the ATPase A chain family. F-type ATPases have 2 components, CF(1) - the catalytic core - and CF(0) - the membrane proton channel. CF(1) has five subunits: alpha(3), beta(3), gamma(1), delta(1), epsilon(1). CF(0) has three main subunits: a(1), b(2) and c(9-12). The alpha and beta chains form an alternating ring which encloses part of the gamma chain. CF(1) is attached to CF(0) by a central stalk formed by the gamma and epsilon chains, while a peripheral stalk is formed by the delta and b chains.

Its subcellular location is the cell inner membrane. Functionally, key component of the proton channel; it plays a direct role in the translocation of protons across the membrane. The protein is ATP synthase subunit a of Psychrobacter sp. (strain PRwf-1).